Here is a 94-residue protein sequence, read N- to C-terminus: Pyrimidine/purine nucleoside phosphorylase (94 aa).

Belongs to the nucleoside phosphorylase PpnP family.

The catalysed reaction is a purine D-ribonucleoside + phosphate = a purine nucleobase + alpha-D-ribose 1-phosphate. It catalyses the reaction adenosine + phosphate = alpha-D-ribose 1-phosphate + adenine. The enzyme catalyses cytidine + phosphate = cytosine + alpha-D-ribose 1-phosphate. It carries out the reaction guanosine + phosphate = alpha-D-ribose 1-phosphate + guanine. The catalysed reaction is inosine + phosphate = alpha-D-ribose 1-phosphate + hypoxanthine. It catalyses the reaction thymidine + phosphate = 2-deoxy-alpha-D-ribose 1-phosphate + thymine. The enzyme catalyses uridine + phosphate = alpha-D-ribose 1-phosphate + uracil. It carries out the reaction xanthosine + phosphate = alpha-D-ribose 1-phosphate + xanthine. Its function is as follows. Catalyzes the phosphorolysis of diverse nucleosides, yielding D-ribose 1-phosphate and the respective free bases. Can use uridine, adenosine, guanosine, cytidine, thymidine, inosine and xanthosine as substrates. Also catalyzes the reverse reactions. This Saccharophagus degradans (strain 2-40 / ATCC 43961 / DSM 17024) protein is Pyrimidine/purine nucleoside phosphorylase.